We begin with the raw amino-acid sequence, 262 residues long: Tryptophan synthase alpha chain (262 aa).

Catalysis depends on proton acceptor residues E52 and D63.

This sequence belongs to the TrpA family. Tetramer of two alpha and two beta chains.

The catalysed reaction is (1S,2R)-1-C-(indol-3-yl)glycerol 3-phosphate + L-serine = D-glyceraldehyde 3-phosphate + L-tryptophan + H2O. Its pathway is amino-acid biosynthesis; L-tryptophan biosynthesis; L-tryptophan from chorismate: step 5/5. Functionally, the alpha subunit is responsible for the aldol cleavage of indoleglycerol phosphate to indole and glyceraldehyde 3-phosphate. In Mycobacteroides abscessus (strain ATCC 19977 / DSM 44196 / CCUG 20993 / CIP 104536 / JCM 13569 / NCTC 13031 / TMC 1543 / L948) (Mycobacterium abscessus), this protein is Tryptophan synthase alpha chain.